Reading from the N-terminus, the 425-residue chain is MAKTIQAIRGMNDCSPTESLLWQWVEEKVRSVLQTYGYSEVRMPIVESTPLFARAIGEVTDVVSKEMYTFWDNDEQLTLRPEGTAGCVRAAIEHGWIYNNEQRLWYMGPMFRHERPQKGRYRQFHQVGVEVFGIANPEIDAELILLTARLWKQLGIFDHVTLQLNSIGSLESRQNYRSALVEFLQQHMDLLSEEEKERLVKNPLRILDTKNQVLQEVLNDAPKLLDYLDQESREHFSQLCDLLDAVGIQYEINPKLVRGLDYYNKTVFEWVTSALGAQGTVCGGGRYDGLVEQLGGHATCSVGFAMGLERLVLLVQEVNKQIVLPSAVDIYVVYFGEKTTLPAFQLAEKIRTELPHLRTMTHCGGGNFKKQFKRADKVGAKFALVIGETEVKTQQVVVKDLLGGAEQLSLALTDVVIYLKQAITQ.

This sequence belongs to the class-II aminoacyl-tRNA synthetase family. Homodimer.

It is found in the cytoplasm. The enzyme catalyses tRNA(His) + L-histidine + ATP = L-histidyl-tRNA(His) + AMP + diphosphate + H(+). The polypeptide is Histidine--tRNA ligase (Histophilus somni (strain 2336) (Haemophilus somnus)).